A 192-amino-acid chain; its full sequence is Glycerol-3-phosphate acyltransferase (192 aa).

5 helical membrane-spanning segments follow: residues 4–24 (MFWL…AILL), 54–74 (LAIL…LIAS), 80–100 (IAQQ…PVYF), 112–132 (AGVL…AWLL), and 154–174 (LLAW…LLIV).

The protein belongs to the PlsY family. Probably interacts with PlsX.

The protein resides in the cell inner membrane. The catalysed reaction is an acyl phosphate + sn-glycerol 3-phosphate = a 1-acyl-sn-glycero-3-phosphate + phosphate. The protein operates within lipid metabolism; phospholipid metabolism. Catalyzes the transfer of an acyl group from acyl-phosphate (acyl-PO(4)) to glycerol-3-phosphate (G3P) to form lysophosphatidic acid (LPA). This enzyme utilizes acyl-phosphate as fatty acyl donor, but not acyl-CoA or acyl-ACP. The sequence is that of Glycerol-3-phosphate acyltransferase from Pseudomonas syringae pv. syringae (strain B728a).